The sequence spans 190 residues: Elongation factor P (190 aa).

Lys-34 is subject to N6-(3,6-diaminohexanoyl)-5-hydroxylysine.

The protein belongs to the elongation factor P family. May be beta-lysylated on the epsilon-amino group of Lys-34 by the combined action of EpmA and EpmB, and then hydroxylated on the C5 position of the same residue by EpmC (if this protein is present). Lysylation is critical for the stimulatory effect of EF-P on peptide-bond formation. The lysylation moiety may extend toward the peptidyltransferase center and stabilize the terminal 3-CCA end of the tRNA. Hydroxylation of the C5 position on Lys-34 may allow additional potential stabilizing hydrogen-bond interactions with the P-tRNA.

It localises to the cytoplasm. It participates in protein biosynthesis; polypeptide chain elongation. Involved in peptide bond synthesis. Alleviates ribosome stalling that occurs when 3 or more consecutive Pro residues or the sequence PPG is present in a protein, possibly by augmenting the peptidyl transferase activity of the ribosome. Modification of Lys-34 is required for alleviation. This chain is Elongation factor P, found in Hahella chejuensis (strain KCTC 2396).